Here is an 898-residue protein sequence, read N- to C-terminus: DNA mismatch repair protein MutS (898 aa).

646–653 serves as a coordination point for ATP; it reads GPNMGGKS.

Belongs to the DNA mismatch repair MutS family.

Functionally, this protein is involved in the repair of mismatches in DNA. It is possible that it carries out the mismatch recognition step. This protein has a weak ATPase activity. The sequence is that of DNA mismatch repair protein MutS from Brucella ovis (strain ATCC 25840 / 63/290 / NCTC 10512).